A 202-amino-acid chain; its full sequence is Holliday junction branch migration complex subunit RuvA (202 aa).

A domain I region spans residues 1–65 (MIAYVEGRLA…EDALELYGFA (65 aa)). The domain II stretch occupies residues 66 to 144 (TWDERQTFIV…VEDLPAAAPL (79 aa)). The tract at residues 145 to 155 (VTGGAPGGVFR) is flexible linker. Positions 155 to 202 (RDALAGLANLGYGEEEASHVLKEVLHGEPDLDVGGALRAALRALARGR) are domain III.

This sequence belongs to the RuvA family. In terms of assembly, homotetramer. Forms an RuvA(8)-RuvB(12)-Holliday junction (HJ) complex. HJ DNA is sandwiched between 2 RuvA tetramers; dsDNA enters through RuvA and exits via RuvB. An RuvB hexamer assembles on each DNA strand where it exits the tetramer. Each RuvB hexamer is contacted by two RuvA subunits (via domain III) on 2 adjacent RuvB subunits; this complex drives branch migration. In the full resolvosome a probable DNA-RuvA(4)-RuvB(12)-RuvC(2) complex forms which resolves the HJ.

The protein localises to the cytoplasm. Functionally, the RuvA-RuvB-RuvC complex processes Holliday junction (HJ) DNA during genetic recombination and DNA repair, while the RuvA-RuvB complex plays an important role in the rescue of blocked DNA replication forks via replication fork reversal (RFR). RuvA specifically binds to HJ cruciform DNA, conferring on it an open structure. The RuvB hexamer acts as an ATP-dependent pump, pulling dsDNA into and through the RuvAB complex. HJ branch migration allows RuvC to scan DNA until it finds its consensus sequence, where it cleaves and resolves the cruciform DNA. The chain is Holliday junction branch migration complex subunit RuvA from Nitratidesulfovibrio vulgaris (strain DP4) (Desulfovibrio vulgaris).